Here is a 267-residue protein sequence, read N- to C-terminus: 3-methyl-2-oxobutanoate hydroxymethyltransferase (267 aa).

Mg(2+) contacts are provided by Asp45 and Asp84. Residues 45 to 46 (DS), Asp84, and Lys113 each bind 3-methyl-2-oxobutanoate. Position 115 (Glu115) interacts with Mg(2+). The Proton acceptor role is filled by Glu182.

The protein belongs to the PanB family. As to quaternary structure, homodecamer; pentamer of dimers. Mg(2+) serves as cofactor.

Its subcellular location is the cytoplasm. It catalyses the reaction 3-methyl-2-oxobutanoate + (6R)-5,10-methylene-5,6,7,8-tetrahydrofolate + H2O = 2-dehydropantoate + (6S)-5,6,7,8-tetrahydrofolate. Its pathway is cofactor biosynthesis; coenzyme A biosynthesis. Catalyzes the reversible reaction in which hydroxymethyl group from 5,10-methylenetetrahydrofolate is transferred onto alpha-ketoisovalerate to form ketopantoate. The sequence is that of 3-methyl-2-oxobutanoate hydroxymethyltransferase from Sulfurisphaera tokodaii (strain DSM 16993 / JCM 10545 / NBRC 100140 / 7) (Sulfolobus tokodaii).